Reading from the N-terminus, the 469-residue chain is 3-isopropylmalate dehydratase large subunit (469 aa).

[4Fe-4S] cluster contacts are provided by cysteine 347, cysteine 410, and cysteine 413.

Belongs to the aconitase/IPM isomerase family. LeuC type 1 subfamily. As to quaternary structure, heterodimer of LeuC and LeuD. [4Fe-4S] cluster serves as cofactor.

It carries out the reaction (2R,3S)-3-isopropylmalate = (2S)-2-isopropylmalate. It functions in the pathway amino-acid biosynthesis; L-leucine biosynthesis; L-leucine from 3-methyl-2-oxobutanoate: step 2/4. Functionally, catalyzes the isomerization between 2-isopropylmalate and 3-isopropylmalate, via the formation of 2-isopropylmaleate. This Burkholderia pseudomallei (strain 1106a) protein is 3-isopropylmalate dehydratase large subunit.